We begin with the raw amino-acid sequence, 689 residues long: Protein CFAP20DC (689 aa).

Disordered stretches follow at residues 241 to 263 (LKST…NRIE), 333 to 423 (SKES…GPSE), and 584 to 659 (ISTS…DLSV). Composition is skewed to polar residues over residues 251-260 (TPSGSSSGNN) and 343-359 (EESQ…SSRP). A compositionally biased stretch (acidic residues) spans 394–405 (SEDDFYGGDSSE). The segment covering 409–421 (HSIQGSRGPTTGP) has biased composition (polar residues). Residues 584-593 (ISTSSDDTTT) are compositionally biased toward low complexity.

In Homo sapiens (Human), this protein is Protein CFAP20DC.